The following is a 374-amino-acid chain: Lipoyl synthase, mitochondrial (374 aa).

[4Fe-4S] cluster is bound by residues cysteine 101, cysteine 106, cysteine 112, cysteine 132, cysteine 136, cysteine 139, and serine 347. One can recognise a Radical SAM core domain in the interval 117–336 (ENGTQTATIM…EERGNDLGFL (220 aa)).

This sequence belongs to the radical SAM superfamily. Lipoyl synthase family. The cofactor is [4Fe-4S] cluster.

The protein resides in the mitochondrion. The catalysed reaction is [[Fe-S] cluster scaffold protein carrying a second [4Fe-4S](2+) cluster] + N(6)-octanoyl-L-lysyl-[protein] + 2 oxidized [2Fe-2S]-[ferredoxin] + 2 S-adenosyl-L-methionine + 4 H(+) = [[Fe-S] cluster scaffold protein] + N(6)-[(R)-dihydrolipoyl]-L-lysyl-[protein] + 4 Fe(3+) + 2 hydrogen sulfide + 2 5'-deoxyadenosine + 2 L-methionine + 2 reduced [2Fe-2S]-[ferredoxin]. Its pathway is protein modification; protein lipoylation via endogenous pathway; protein N(6)-(lipoyl)lysine from octanoyl-[acyl-carrier-protein]: step 2/2. Functionally, catalyzes the radical-mediated insertion of two sulfur atoms into the C-6 and C-8 positions of the octanoyl moiety bound to the lipoyl domains of lipoate-dependent enzymes, thereby converting the octanoylated domains into lipoylated derivatives. This is Lipoyl synthase, mitochondrial from Drosophila pseudoobscura pseudoobscura (Fruit fly).